We begin with the raw amino-acid sequence, 176 residues long: RNA polymerase sigma factor SigO (176 aa).

Positions 30-43 match the Polymerase core binding motif; the sequence is DARSLDELFKQFYK. The H-T-H motif DNA-binding region spans 139–158; that stretch reads MQEIADSLGESRQNISNIHK.

The protein belongs to the sigma-70 factor family. Interacts with RNA polymerase.

Sigma factors are initiation factors that promote the attachment of RNA polymerase to specific initiation sites and are then released. Together with its coactivator RsoA, positively regulates the expression of at least three operons, including oxdC-yvrL, sigO-rsoA and yvrJ. Required for the acid stress-dependent induction of the oxalate decarboxylase oxdC. The polypeptide is RNA polymerase sigma factor SigO (sigO) (Bacillus subtilis (strain 168)).